Reading from the N-terminus, the 258-residue chain is Type II restriction enzyme HindII (258 aa).

The enzyme catalyses Endonucleolytic cleavage of DNA to give specific double-stranded fragments with terminal 5'-phosphates.. A P subtype restriction enzyme that recognizes the double-stranded sequence 5'-GTYRAC-3' and cleaves after Y-3. This Haemophilus influenzae (strain ATCC 51907 / DSM 11121 / KW20 / Rd) protein is Type II restriction enzyme HindII (hindIIR).